The following is a 356-amino-acid chain: Phenylalanine--tRNA ligase alpha subunit (356 aa).

Glutamate 260 serves as a coordination point for Mg(2+).

The protein belongs to the class-II aminoacyl-tRNA synthetase family. Phe-tRNA synthetase alpha subunit type 1 subfamily. As to quaternary structure, tetramer of two alpha and two beta subunits. Requires Mg(2+) as cofactor.

Its subcellular location is the cytoplasm. The catalysed reaction is tRNA(Phe) + L-phenylalanine + ATP = L-phenylalanyl-tRNA(Phe) + AMP + diphosphate + H(+). This Gluconobacter oxydans (strain 621H) (Gluconobacter suboxydans) protein is Phenylalanine--tRNA ligase alpha subunit.